A 93-amino-acid chain; its full sequence is Small ribosomal subunit protein uS19 (93 aa).

The protein belongs to the universal ribosomal protein uS19 family.

Its function is as follows. Protein S19 forms a complex with S13 that binds strongly to the 16S ribosomal RNA. The chain is Small ribosomal subunit protein uS19 from Symbiobacterium thermophilum (strain DSM 24528 / JCM 14929 / IAM 14863 / T).